The primary structure comprises 547 residues: Phospholipase DDHD1 (547 aa).

Ser-184 is an active-site residue. Residues 258 to 533 (LKFKVENFFC…ALFLLTFMYK (276 aa)) enclose the DDHD domain. The residue at position 370 (Ser-370) is a Phosphoserine. Residues 414–448 (RSSASQPSEPSKDSLEDDKKPSASPSTTTVATQTL) form a disordered region. The segment covering 423-434 (PSKDSLEDDKKP) has biased composition (basic and acidic residues). Positions 435–448 (SASPSTTTVATQTL) are enriched in low complexity.

It belongs to the PA-PLA1 family. As to quaternary structure, forms homooligomers and, to a much smaller extent, heterooligomers with DDHD2. Interacts with SEC23A and SEC24C. In terms of tissue distribution, predominantly expressed in testis, in round and elongating spermatids, but not in spermatocytes (at protein level). Also expressed in the brain, and at lower levels in other tissues such as thymus and lung (at protein level).

It localises to the cytoplasm. The enzyme catalyses a 1,2-diacyl-sn-glycero-3-phosphate + H2O = a 2-acyl-sn-glycerol 3-phosphate + a fatty acid + H(+). It catalyses the reaction a 1,2-diacyl-sn-glycero-3-phospho-(1D-myo-inositol) + H2O = a 2-acyl-sn-glycero-3-phospho-D-myo-inositol + a fatty acid + H(+). It carries out the reaction 1-octadecanoyl-2-(5Z,8Z,11Z,14Z-eicosatetraenoyl)-sn-glycero-3-phospho-(1D-myo-inositol) + H2O = 2-(5Z,8Z,11Z,14Z-eicosatetraenoyl)-sn-glycero-3-phospho-(1D-myo-inositol) + octadecanoate + H(+). The catalysed reaction is a 1-acyl-2-(5Z,8Z,11Z,14Z-eicosatetraenoyl)-sn-glycero-3-phospho-(1D-myo-inositol) + H2O = 2-(5Z,8Z,11Z,14Z-eicosatetraenoyl)-sn-glycero-3-phospho-(1D-myo-inositol) + a fatty acid + H(+). The enzyme catalyses 1,2-dihexadecanoyl-sn-glycero-3-phospho-(1D-myo-inositol) + H2O = 2-hexadecanoyl-sn-glycero-3-phospho-(1D-myo-inositol) + hexadecanoate + H(+). It catalyses the reaction a 1-acyl-2-(5Z,8Z,11Z,14Z)-eicosatetraenoyl-sn-glycero-3-phosphate + H2O = 2-(5Z,8Z,11Z,14Z-eicosatetraenoyl)-sn-glycero-3-phosphate + a fatty acid + H(+). It carries out the reaction 1-(9Z-octadecenoyl)-2-(7Z,10Z,13Z,16Z,19Z-docosapentaenoyl)-sn-glycero-3-phospho-1D-myo-inositol + H2O = 2-(7Z,10Z,13Z,16Z,19Z-docosapentaenoyl)-sn-glycero-3-phospho-1D-myo-inositol + (9Z)-octadecenoate + H(+). The catalysed reaction is 1-(9Z-octadecenoyl)-2-(5Z,8Z,11Z,14Z-eicosatetraenoyl)-sn-glycero-3-phospho-1D-myo-inositol + H2O = 2-(5Z,8Z,11Z,14Z-eicosatetraenoyl)-sn-glycero-3-phospho-(1D-myo-inositol) + (9Z)-octadecenoate + H(+). The enzyme catalyses 1,2-di-(9Z-octadecenoyl)-sn-glycero-3-phospho-1D-myo-inositol + H2O = 2-(9Z-octadecenoyl)-sn-glycero-3-phospho-1D-myo-inositol + (9Z)-octadecenoate + H(+). It catalyses the reaction 1-(9Z-octadecenoyl)-2-(8Z,11Z,14Z-eicosatrienoyl)-sn-glycero-3-phospho-1D-myo-inositol + H2O = 2-(8Z,11Z,14Z-eicosatrienoyl)-sn-glycero-3-phospho-1D-myo-inositol + (9Z)-octadecenoate + H(+). It carries out the reaction 1,2-di-(9Z-octadecenoyl)-sn-glycero-3-phosphate + H2O = 2-(9Z-octadecenoyl)-sn-glycero-3-phosphate + (9Z)-octadecenoate + H(+). The catalysed reaction is 1-hexadecanoyl-2-(9Z-octadecenoyl)-sn-glycero-3-phosphate + H2O = 2-(9Z-octadecenoyl)-sn-glycero-3-phosphate + hexadecanoate + H(+). The enzyme catalyses 1-hexadecanoyl-2-(9Z-octadecenoyl)-sn-glycero-3-phospho-L-serine + H2O = 2-(9Z-octadecenoyl)-sn-glycero-3-phospho-L-serine + hexadecanoate + H(+). It catalyses the reaction 1,2-di-(5Z,8Z,11Z,14Z)-eicosatetraenoyl-sn-glycero-3-phosphate + H2O = 2-(5Z,8Z,11Z,14Z-eicosatetraenoyl)-sn-glycero-3-phosphate + (5Z,8Z,11Z,14Z)-eicosatetraenoate + H(+). It carries out the reaction 1-octadecanoyl-2-(5Z,8Z,11Z,14Z-eicosatetraenoyl)-sn-glycero-3-phosphate + H2O = 2-(5Z,8Z,11Z,14Z-eicosatetraenoyl)-sn-glycero-3-phosphate + octadecanoate + H(+). The catalysed reaction is a 1,2-diacyl-sn-glycero-3-phospho-L-serine + H2O = a 2-acyl-sn-glycero-3-phospho-L-serine + a fatty acid + H(+). The enzyme catalyses a 1,2-diacyl-sn-glycero-3-phosphocholine + H2O = a 2-acyl-sn-glycero-3-phosphocholine + a fatty acid + H(+). It catalyses the reaction 1,2-di-(9Z-octadecenoyl)-sn-glycero-3-phosphocholine + H2O = (9Z-octadecenoyl)-sn-glycero-3-phosphocholine + (9Z)-octadecenoate + H(+). It carries out the reaction a 1,2-diacyl-sn-glycero-3-phosphoethanolamine + H2O = a 2-acyl-sn-glycero-3-phosphoethanolamine + a fatty acid + H(+). The catalysed reaction is a 1,2-diacyl-sn-glycero-3-phospho-(1'-sn-glycerol) + H2O = 2-acyl-sn-glycero-3-phospho-(1'-sn-glycerol) + a fatty acid + H(+). The enzyme catalyses 1-hexadecanoyl-2-(9Z-octadecenoyl)-sn-glycero-3-phospho-(1'-sn-glycerol) + H2O = 2-(9Z-octadecenoyl)-sn-glycero-3-phospho-(1'-sn-glycerol) + hexadecanoate + H(+). It catalyses the reaction 1-acyl-2-(5Z,8Z,11Z,14Z-eicosatetraenoyl)-sn-glycero-3-phosphocholine + H2O = 2-(5Z,8Z,11Z,14Z)-eicosatetraenoyl-sn-glycero-3-phosphocholine + a fatty acid + H(+). It carries out the reaction 1-acyl-2-(5Z,8Z,11Z,14Z)-eicosatetraenoyl-sn-glycero-3-phosphoethanolamine + H2O = 2-(5Z,8Z,11Z,14Z)-eicosatetraenoyl-sn-glycero-3-phosphoethanolamine + a fatty acid + H(+). The protein operates within phospholipid metabolism; phosphatidylinositol metabolism. Phospholipase A1 (PLA1) that hydrolyzes ester bonds at the sn-1 position of glycerophospholipids producing a free fatty acid and a lysophospholipid. Prefers phosphatidate (1,2-diacyl-sn-glycero-3-phosphate, PA) as substrate in vitro, but can efficiently hydrolyze phosphatidylinositol (1,2-diacyl-sn-glycero-3-phospho-(1D-myo-inositol), PI), as well as a range of other glycerophospholipid substrates such as phosphatidylcholine (1,2-diacyl-sn-glycero-3-phosphocholine, PC), phosphatidylethanolamine (1,2-diacyl-sn-glycero-3-phosphoethanolamine, PE), phosphatidylserine (1,2-diacyl-sn-glycero-3-phospho-L-serine, PS) and phosphatidylglycerol (1,2-diacyl-sn-glycero-3-phospho-(1'-sn-glycerol), PG). Involved in the regulation of the endogenous content of polyunsaturated PI and PS lipids in the nervous system. Changes in these lipids extend to downstream metabolic products like PI phosphates PIP and PIP2, which play fundamental roles in cell biology. Regulates mitochondrial morphology. These dynamic changes may be due to PA hydrolysis at the mitochondrial surface. May play a regulatory role in spermatogenesis or sperm function. This chain is Phospholipase DDHD1, found in Mus musculus (Mouse).